We begin with the raw amino-acid sequence, 560 residues long: Nuclear receptor subfamily 5 group A member 2 (560 aa).

The segment at 17-54 (GLPAIAPAPGSETPHSPKLEEKHREKRAGLPDRHRRPI) is disordered. The span at 31–48 (HSPKLEEKHREKRAGLPD) shows a compositional bias: basic and acidic residues. Residues 104-179 (EELCPVCGDK…VGMKLEAVRA (76 aa)) constitute a DNA-binding region (nuclear receptor). The Zn(2+) site is built by cysteine 107, cysteine 110, cysteine 124, cysteine 127, cysteine 143, cysteine 149, cysteine 159, and cysteine 162. NR C4-type zinc fingers lie at residues 107–127 (CPVC…CESC) and 143–162 (CIEN…CPYC). Residues 173–188 (KLEAVRADRMRGGRNK) form a C-terminal extension (CTE) region. Residues 189-208 (FGPMYKRDRALKQQKKALIR) carry the FTZ-F1 box motif. Residue lysine 289 forms a Glycyl lysine isopeptide (Lys-Gly) (interchain with G-Cter in SUMO1) linkage. In terms of domain architecture, NR LBD spans 319–558 (SIPHLILELL…NLLIEMLHAK (240 aa)). A phospholipid derivative-binding residues include tyrosine 535 and lysine 539. Residues 547-558 (YNNLLIEMLHAK) form an AF-2 region.

Belongs to the nuclear hormone receptor family. NR5 subfamily. Monomer; Binds DNA as a monomer. Interacts with nuclear receptor corepressors NR0B1 and NR0B2; repressing NR5A2 nuclear receptor activity. Interacts with nuclear receptor coactivators CTNNB1, PPARGC1A and NCOA2; interaction takes place following ligand-binding and promotes target gene activation. Interacts (when sumoylated) with GPS2; interaction with GPS2 onto hepatic acute phase protein promoters prevents N-Cor corepressor complex dissociation. Interacts with HNF1A. Interacts with GRIP1. Post-translationally, sumoylated by SUMO1 at Lys-289 during the hepatic acute phase response, leading to promote interaction with GPS2 and prevent N-Cor corepressor complex dissociation.

The protein localises to the nucleus. It is found in the chromosome. Its function is as follows. Orphan nuclear receptor that binds DNA as a monomer to the 5'-TCAAGGCCA-3' sequence and controls expression of target genes: regulates key biological processes, such as early embryonic development, cholesterol and bile acid synthesis pathways, as well as liver and pancreas morphogenesis. Ligand-binding causes conformational change which causes recruitment of coactivators, promoting target gene activation. The specific ligand is unknown, but specific phospholipids, such as phosphatidylethanolamine, phosphatidylserine, dilauroyl phosphatidylcholine and diundecanoyl phosphatidylcholine can act as ligand in vitro. Acts as a pioneer transcription factor, which unwraps target DNA from histones and elicits local opening of closed chromatin. Plays a central role during preimplantation stages of embryonic development. Plays a minor role in zygotic genome activation (ZGA) by regulating a small set of two-cell stage genes. Plays a major role in morula development (2-16 cells embryos) by acting as a master regulator at the 8-cell stage, controlling expression of lineage-specifying transcription factors and genes involved in mitosis, telomere maintenance and DNA repair. Zygotic NR5A2 binds to both closed and open chromatin with other transcription factors, often at SINE B1/Alu repeats DNA elements, promoting chromatin accessibility at nearby regulatory regions. Also involved in the epiblast stage of development and embryonic stem cell pluripotency, by promoting expression of POU5F1/OCT4. Regulates other processes later in development, such as formation of connective tissue in lower jaw and middle ear, neural stem cell differentiation, ovarian follicle development and Sertoli cell differentiation. Involved in exocrine pancreas development and acinar cell differentiation. Acts as an essential transcriptional regulator of lipid metabolism. Key regulator of cholesterol 7-alpha-hydroxylase gene (CYP7A) expression in liver. Also acts as a negative regulator of inflammation in different organs, such as, liver and pancreas. Protects against intestinal inflammation via its ability to regulate glucocorticoid production. Plays an anti-inflammatory role during the hepatic acute phase response by acting as a corepressor: inhibits the hepatic acute phase response by preventing dissociation of the N-Cor corepressor complex. Acts as a regulator of immunity by promoting lymphocyte T-cell development, proliferation and effector functions. Also involved in resolution of endoplasmic reticulum stress in the liver. The sequence is that of Nuclear receptor subfamily 5 group A member 2 from Rattus norvegicus (Rat).